Here is a 936-residue protein sequence, read N- to C-terminus: Isoleucine--tRNA ligase (936 aa).

The short motif at 58–68 (PYANGRAHLGT) is the 'HIGH' region element. Glutamate 561 provides a ligand contact to L-isoleucyl-5'-AMP. The 'KMSKS' region motif lies at 602–606 (KMSKS). An ATP-binding site is contributed by lysine 605. Residues cysteine 899, cysteine 902, cysteine 919, and cysteine 922 each coordinate Zn(2+).

It belongs to the class-I aminoacyl-tRNA synthetase family. IleS type 1 subfamily. As to quaternary structure, monomer. Zn(2+) is required as a cofactor.

It is found in the cytoplasm. The enzyme catalyses tRNA(Ile) + L-isoleucine + ATP = L-isoleucyl-tRNA(Ile) + AMP + diphosphate. In terms of biological role, catalyzes the attachment of isoleucine to tRNA(Ile). As IleRS can inadvertently accommodate and process structurally similar amino acids such as valine, to avoid such errors it has two additional distinct tRNA(Ile)-dependent editing activities. One activity is designated as 'pretransfer' editing and involves the hydrolysis of activated Val-AMP. The other activity is designated 'posttransfer' editing and involves deacylation of mischarged Val-tRNA(Ile). This chain is Isoleucine--tRNA ligase, found in Coxiella burnetii (strain Dugway 5J108-111).